A 223-amino-acid polypeptide reads, in one-letter code: Phosphoribosylformylglycinamidine synthase subunit PurQ (223 aa).

The 220-residue stretch at 4-223 (FAVVVFPGTN…FRSMVEWARK (220 aa)) folds into the Glutamine amidotransferase type-1 domain. The active-site Nucleophile is C85. Active-site residues include H196 and E198.

In terms of assembly, part of the FGAM synthase complex composed of 1 PurL, 1 PurQ and 2 PurS subunits.

It is found in the cytoplasm. The enzyme catalyses N(2)-formyl-N(1)-(5-phospho-beta-D-ribosyl)glycinamide + L-glutamine + ATP + H2O = 2-formamido-N(1)-(5-O-phospho-beta-D-ribosyl)acetamidine + L-glutamate + ADP + phosphate + H(+). It carries out the reaction L-glutamine + H2O = L-glutamate + NH4(+). Its pathway is purine metabolism; IMP biosynthesis via de novo pathway; 5-amino-1-(5-phospho-D-ribosyl)imidazole from N(2)-formyl-N(1)-(5-phospho-D-ribosyl)glycinamide: step 1/2. Functionally, part of the phosphoribosylformylglycinamidine synthase complex involved in the purines biosynthetic pathway. Catalyzes the ATP-dependent conversion of formylglycinamide ribonucleotide (FGAR) and glutamine to yield formylglycinamidine ribonucleotide (FGAM) and glutamate. The FGAM synthase complex is composed of three subunits. PurQ produces an ammonia molecule by converting glutamine to glutamate. PurL transfers the ammonia molecule to FGAR to form FGAM in an ATP-dependent manner. PurS interacts with PurQ and PurL and is thought to assist in the transfer of the ammonia molecule from PurQ to PurL. The sequence is that of Phosphoribosylformylglycinamidine synthase subunit PurQ from Thermococcus kodakarensis (strain ATCC BAA-918 / JCM 12380 / KOD1) (Pyrococcus kodakaraensis (strain KOD1)).